The primary structure comprises 267 residues: uncharacterized protein (267 aa).

This sequence to S.pombe SpAC18G6.12c.

This is an uncharacterized protein from Schizosaccharomyces pombe (strain 972 / ATCC 24843) (Fission yeast).